Here is a 642-residue protein sequence, read N- to C-terminus: Threonine--tRNA ligase (642 aa).

Residues 1-61 (MPVITLPDGS…ENDATLSIIT (61 aa)) form the TGS domain. The interval 243–534 (DHRKIGKQLD…LTEEFAGFFP (292 aa)) is catalytic. Residues C334, H385, and H511 each coordinate Zn(2+).

It belongs to the class-II aminoacyl-tRNA synthetase family. In terms of assembly, homodimer. The cofactor is Zn(2+).

Its subcellular location is the cytoplasm. The catalysed reaction is tRNA(Thr) + L-threonine + ATP = L-threonyl-tRNA(Thr) + AMP + diphosphate + H(+). Catalyzes the attachment of threonine to tRNA(Thr) in a two-step reaction: L-threonine is first activated by ATP to form Thr-AMP and then transferred to the acceptor end of tRNA(Thr). Also edits incorrectly charged L-seryl-tRNA(Thr). In Salmonella heidelberg (strain SL476), this protein is Threonine--tRNA ligase.